A 268-amino-acid chain; its full sequence is NAC transcription factor 29 (268 aa).

Residues 9 to 161 (LPPGFRFHPT…EWVLCRIYKK (153 aa)) enclose the NAC domain. Residues 106-167 (VGVKKALVFY…IYKKRGASKL (62 aa)) mediate DNA binding.

Expressed in senescing leaves, petals and sepals.

It localises to the nucleus. In terms of biological role, transcription activator that binds to, and transactivates the promoter of the abscisic aldehyde oxidase AAO3. Promotes chlorophyll degradation in leaves by enhancing transcription of AAO3, which leads to increased levels of the senescence-inducing hormone abscisic acid (ABA). Involved in the control of dehydration in senescing leaves. Binds to the DNA sequence 5'-CACGTAAGT-3' of SAG113 promoter. SAG113 acts as a negative regulator of ABA signaling for stomatal closure in leaves, and controls water loss during leaf senescence. Transcription factor of the NAC family involved in senescence. May function in the transition between active cell division and cell expansion. Required for normal seed development and morphology. This Arabidopsis thaliana (Mouse-ear cress) protein is NAC transcription factor 29 (NAC029).